The sequence spans 202 residues: Peptide methionine sulfoxide reductase A1 (202 aa).

The disordered stretch occupies residues 1–20 (MNILNKLGIGSSRQTNMDPS). Residue S189 is modified to Phosphoserine.

This sequence belongs to the MsrA Met sulfoxide reductase family.

It is found in the cytoplasm. The protein resides in the cytosol. It catalyses the reaction L-methionyl-[protein] + [thioredoxin]-disulfide + H2O = L-methionyl-(S)-S-oxide-[protein] + [thioredoxin]-dithiol. The catalysed reaction is [thioredoxin]-disulfide + L-methionine + H2O = L-methionine (S)-S-oxide + [thioredoxin]-dithiol. Functionally, catalyzes the reduction of methionine sulfoxide (MetSO) to methionine in proteins. Plays a protective role against oxidative stress by restoring activity to proteins that have been inactivated by methionine oxidation. MSRA family specifically reduces the MetSO S-enantiomer. This chain is Peptide methionine sulfoxide reductase A1 (MSRA1), found in Arabidopsis thaliana (Mouse-ear cress).